The chain runs to 145 residues: Small ribosomal subunit protein uS17c (145 aa).

The transit peptide at 1–36 (MLLTTPFVSSPVRVQGNGGSGASPWAGAATALRIQA) directs the protein to the chloroplast. Residues 101–145 (KTKHFLAVPLPPRDTRRKSQLLPPLQSQSQSQDQDQPPTPPPSSD) are disordered. Residues 120–136 (QLLPPLQSQSQSQDQDQ) are compositionally biased toward low complexity.

This sequence belongs to the universal ribosomal protein uS17 family. In terms of assembly, part of the 30S ribosomal subunit.

It localises to the plastid. The protein localises to the chloroplast. Its function is as follows. One of the primary rRNA binding proteins, it binds specifically to the 5'-end of 16S ribosomal RNA. The protein is Small ribosomal subunit protein uS17c (RPS17) of Oryza sativa subsp. japonica (Rice).